The primary structure comprises 249 residues: Eukaryotic translation initiation factor 3 subunit K (249 aa).

Positions 46–222 (FDCYANLALL…VKVPTNKENE (177 aa)) constitute a PCI domain.

It belongs to the eIF-3 subunit K family. Component of the eukaryotic translation initiation factor 3 (eIF-3) complex.

The protein localises to the cytoplasm. In terms of biological role, component of the eukaryotic translation initiation factor 3 (eIF-3) complex, which is involved in protein synthesis of a specialized repertoire of mRNAs and, together with other initiation factors, stimulates binding of mRNA and methionyl-tRNAi to the 40S ribosome. The eIF-3 complex specifically targets and initiates translation of a subset of mRNAs involved in cell proliferation. The sequence is that of Eukaryotic translation initiation factor 3 subunit K from Neosartorya fischeri (strain ATCC 1020 / DSM 3700 / CBS 544.65 / FGSC A1164 / JCM 1740 / NRRL 181 / WB 181) (Aspergillus fischerianus).